The following is a 38-amino-acid chain: Large ribosomal subunit protein bL36 (38 aa).

Belongs to the bacterial ribosomal protein bL36 family.

The protein is Large ribosomal subunit protein bL36 of Aster yellows witches'-broom phytoplasma (strain AYWB).